The primary structure comprises 268 residues: 4-hydroxy-tetrahydrodipicolinate reductase (268 aa).

NAD(+) contacts are provided by residues 7–12 and Glu-33; that span reads GAGGRM. Arg-34 is a binding site for NADP(+). Residues 97 to 99 and 121 to 124 contribute to the NAD(+) site; these read GTT and SGNM. The Proton donor/acceptor role is filled by His-155. Residue His-156 participates in (S)-2,3,4,5-tetrahydrodipicolinate binding. Catalysis depends on Lys-159, which acts as the Proton donor. Position 165–166 (165–166) interacts with (S)-2,3,4,5-tetrahydrodipicolinate; that stretch reads GT.

It belongs to the DapB family.

It is found in the cytoplasm. The catalysed reaction is (S)-2,3,4,5-tetrahydrodipicolinate + NAD(+) + H2O = (2S,4S)-4-hydroxy-2,3,4,5-tetrahydrodipicolinate + NADH + H(+). It carries out the reaction (S)-2,3,4,5-tetrahydrodipicolinate + NADP(+) + H2O = (2S,4S)-4-hydroxy-2,3,4,5-tetrahydrodipicolinate + NADPH + H(+). It functions in the pathway amino-acid biosynthesis; L-lysine biosynthesis via DAP pathway; (S)-tetrahydrodipicolinate from L-aspartate: step 4/4. Catalyzes the conversion of 4-hydroxy-tetrahydrodipicolinate (HTPA) to tetrahydrodipicolinate. This Brucella melitensis biotype 1 (strain ATCC 23456 / CCUG 17765 / NCTC 10094 / 16M) protein is 4-hydroxy-tetrahydrodipicolinate reductase.